A 343-amino-acid chain; its full sequence is Small ribosomal subunit biogenesis GTPase RsgA (343 aa).

One can recognise a CP-type G domain in the interval 116–275 (RGQLKPVAAN…LIDSPGIREF (160 aa)). GTP-binding positions include 163–166 (NKFD) and 217–225 (GQSGVGKSS). 4 residues coordinate Zn(2+): Cys299, Cys304, His306, and Cys312.

Belongs to the TRAFAC class YlqF/YawG GTPase family. RsgA subfamily. As to quaternary structure, monomer. Associates with 30S ribosomal subunit, binds 16S rRNA. Zn(2+) serves as cofactor.

The protein localises to the cytoplasm. Functionally, one of several proteins that assist in the late maturation steps of the functional core of the 30S ribosomal subunit. Helps release RbfA from mature subunits. May play a role in the assembly of ribosomal proteins into the subunit. Circularly permuted GTPase that catalyzes slow GTP hydrolysis, GTPase activity is stimulated by the 30S ribosomal subunit. This chain is Small ribosomal subunit biogenesis GTPase RsgA, found in Pseudomonas fluorescens (strain Pf0-1).